We begin with the raw amino-acid sequence, 191 residues long: Probable GTP-binding protein EngB (191 aa).

The region spanning 13–189 (DRLEVAFAGR…RAEIVALLPD (177 aa)) is the EngB-type G domain. Residues 21-28 (GRSNVGKS), 48-52 (GRTRE), 67-70 (DLPG), 134-137 (TKTD), and 168-170 (TSS) contribute to the GTP site. Mg(2+)-binding residues include Ser-28 and Thr-50.

Belongs to the TRAFAC class TrmE-Era-EngA-EngB-Septin-like GTPase superfamily. EngB GTPase family. Requires Mg(2+) as cofactor.

Necessary for normal cell division and for the maintenance of normal septation. The chain is Probable GTP-binding protein EngB from Maricaulis maris (strain MCS10) (Caulobacter maris).